Here is a 266-residue protein sequence, read N- to C-terminus: Glutamate racemase (266 aa).

Substrate is bound by residues 9–10 (DS) and 41–42 (YG). C73 acts as the Proton donor/acceptor in catalysis. Substrate is bound at residue 74-75 (NT). C183 acts as the Proton donor/acceptor in catalysis. 184–185 (TH) contributes to the substrate binding site.

It belongs to the aspartate/glutamate racemases family.

It carries out the reaction L-glutamate = D-glutamate. It functions in the pathway cell wall biogenesis; peptidoglycan biosynthesis. Provides the (R)-glutamate required for cell wall biosynthesis. The sequence is that of Glutamate racemase from Shewanella woodyi (strain ATCC 51908 / MS32).